The sequence spans 351 residues: MFCFLGLRLLKYITFRTAYATIFAFLLALIFGPFIISRLKKLKLDQILRKDGPKRHLSEKMGIPTMGGVLIFFCVLVSLFFWIHFFNIYFLIVLFVMVSFACLGFTDDLLKIKRKNSDGLNPKFKIYGQILFSFISVVMLYYFGGEHVSILYFPFFKSLKLDLGILYIPFGMFVLISASNSFNLTDGLDGLAIGLSIVVIGALIIIAYLTSRVDFALYLNIPNVKGCEELVIFLGALLGGSFGFLWFNAYPAKIMMGDTGSLSIGAVLGMVALILKSEILFAILAGVFVVETLSVIIQVVVYKKTKKRVFKMAPLHHHFEELGWSEMQVVIRFWIIGLIFAILALSTIKIR.

The next 10 membrane-spanning stretches (helical) occupy residues 17-37, 61-83, 88-105, 130-150, 158-178, 190-210, 230-250, 254-274, 279-299, and 328-348; these read TAYATIFAFLLALIFGPFIIS, MGIPTMGGVLIFFCVLVSLFFWI, IYFLIVLFVMVSFACLGF, ILFSFISVVMLYYFGGEHVSI, SLKLDLGILYIPFGMFVLISA, GLAIGLSIVVIGALIIIAYLT, LVIFLGALLGGSFGFLWFNAY, IMMGDTGSLSIGAVLGMVALI, ILFAILAGVFVVETLSVIIQV, and QVVIRFWIIGLIFAILALSTI.

This sequence belongs to the glycosyltransferase 4 family. MraY subfamily. The cofactor is Mg(2+).

Its subcellular location is the cell inner membrane. The enzyme catalyses UDP-N-acetyl-alpha-D-muramoyl-L-alanyl-gamma-D-glutamyl-meso-2,6-diaminopimeloyl-D-alanyl-D-alanine + di-trans,octa-cis-undecaprenyl phosphate = di-trans,octa-cis-undecaprenyl diphospho-N-acetyl-alpha-D-muramoyl-L-alanyl-D-glutamyl-meso-2,6-diaminopimeloyl-D-alanyl-D-alanine + UMP. It participates in cell wall biogenesis; peptidoglycan biosynthesis. Catalyzes the initial step of the lipid cycle reactions in the biosynthesis of the cell wall peptidoglycan: transfers peptidoglycan precursor phospho-MurNAc-pentapeptide from UDP-MurNAc-pentapeptide onto the lipid carrier undecaprenyl phosphate, yielding undecaprenyl-pyrophosphoryl-MurNAc-pentapeptide, known as lipid I. The sequence is that of Phospho-N-acetylmuramoyl-pentapeptide-transferase from Borrelia duttonii (strain Ly).